The sequence spans 1019 residues: Photoactivated adenylate cyclase subunit alpha-like protein ST- (1019 aa).

The BLUF 1 domain maps to 55–148 (LRRLMYLSAS…GRMYGEWHMK (94 aa)). Residues 204-332 (VLTFIYLVEF…DCINTASRIT (129 aa)) form the Guanylate cyclase 1 domain. The 93-residue stretch at 467 to 559 (LITLTYISQA…RVYGTPLDMT (93 aa)) folds into the BLUF 2 domain. In terms of domain architecture, Guanylate cyclase 2 spans 615–744 (VMLATDICSF…EVSARVMAVE (130 aa)). Disordered regions lie at residues 801 to 846 (EDHL…TRPH), 887 to 923 (QIAA…DQPA), and 963 to 993 (EGHR…NRAT). Basic residues predominate over residues 821-834 (RHQRPGPGRPRRGH).

This sequence belongs to the adenylyl cyclase class-4/guanylyl cyclase family. As to quaternary structure, heterotetramer of two alpha and two beta subunits.

Its subcellular location is the cell projection. It localises to the cilium. The protein resides in the flagellum. The sequence is that of Photoactivated adenylate cyclase subunit alpha-like protein ST- from Euglena gracilis.